A 181-amino-acid polypeptide reads, in one-letter code: Cell division protein SepF (181 aa).

A compositionally biased stretch (acidic residues) spans 18–27 (EDYLDDDDYD). The interval 18 to 42 (EDYLDDDDYDDGRAVGHDDRRAMHE) is disordered. Basic and acidic residues predominate over residues 28–42 (DGRAVGHDDRRAMHE).

It belongs to the SepF family. Homodimer. Interacts with FtsZ.

It localises to the cytoplasm. Cell division protein that is part of the divisome complex and is recruited early to the Z-ring. Probably stimulates Z-ring formation, perhaps through the cross-linking of FtsZ protofilaments. Its function overlaps with FtsA. This Frankia alni (strain DSM 45986 / CECT 9034 / ACN14a) protein is Cell division protein SepF.